The sequence spans 261 residues: CD40 ligand (261 aa).

Topologically, residues Met1–Lys22 are cytoplasmic. The helical; Signal-anchor for type II membrane protein transmembrane segment at Ile23–Ala43 threads the bilayer. Over Ala44–Asn240 the chain is Extracellular. Positions Ile122 to Leu261 constitute a THD domain. Cysteines 178 and 218 form a disulfide. An N-linked (GlcNAc...) asparagine glycan is attached at Asn240.

It belongs to the tumor necrosis factor family. In terms of assembly, homotrimer. Interacts with CD28. CD40 ligand, soluble form: Exists as either a monomer or a homotrimer. Forms a ternary complex between CD40 and integrins for CD40-CD40LG signaling. In terms of processing, the soluble form derives from the membrane form by proteolytic processing.

Its subcellular location is the cell membrane. It localises to the cell surface. It is found in the secreted. Cytokine that acts as a ligand to CD40/TNFRSF5. Costimulates T-cell proliferation and cytokine production. Its cross-linking on T-cells generates a costimulatory signal which enhances the production of IL4 and IL10 in conjunction with the TCR/CD3 ligation and CD28 costimulation. Induces the activation of NF-kappa-B. Induces the activation of kinases MAPK8 and PAK2 in T-cells. Mediates B-cell proliferation in the absence of co-stimulus as well as IgE production in the presence of IL4. Involved in immunoglobulin class switching. In terms of biological role, acts as a ligand for integrins, specifically ITGA5:ITGB1 and ITGAV:ITGB3; both integrins and the CD40 receptor are required for activation of CD40-CD40LG signaling, which have cell-type dependent effects, such as B-cell activation, NF-kappa-B signaling and anti-apoptotic signaling. The protein is CD40 ligand (CD40LG) of Sus scrofa (Pig).